We begin with the raw amino-acid sequence, 477 residues long: Maternal protein exuperantia-2 (477 aa).

Over residues 196-209 (KDGNSTKEDEHENP) the composition is skewed to basic and acidic residues. 2 disordered regions span residues 196–226 (KDGN…NQKQ) and 384–477 (TIKP…FADI). Residues 385-402 (IKPRCKRSGNGTRRRNRA) are compositionally biased toward basic residues.

In terms of biological role, ensures the proper localization of the mRNA of the bicoid gene to the anterior regions of the oocyte thus playing a fundamental role in the establishment of the polarity of the oocyte. May bind the bcd mRNA. In Drosophila pseudoobscura pseudoobscura (Fruit fly), this protein is Maternal protein exuperantia-2 (exu2).